The following is a 454-amino-acid chain: MNLRIKKWLEKLDQFEKILVHMPSIMYCGKLIGINGLVLEVSGLKLPIGTICIVEKNNSILDSDMIEAEVIGFRRNLLLLLLLSNVSDLTADSKVTPKILNGSYYNINKLPVCDKLLGRIVDGLGKPLDNFSKIDSKYNVSLTNVSINPLHREPVTHVLDTGIRSINGLLTIGRGQKIGLFASSGLGKSVLLGMMTRYTQADIVILSLIGERGREVKEFIDSVLTETVLSRSIVISAPSESSVLMQTRGAIYAMRIAEYFRDKNFHVLLIMDSLTRYAMAHREISLSIGELPVSKGYPPSVFSKLFSLIERAGNGKINSGSITAFFTVLTEEEERYDPISESARSILDGHIILSREYAESGHYPAINIENSISRVMPNIVDSSHYSFACHFKKIVSLYQRNRDLINVGAYISGTDPDLDMAITLIPKLNKFLQQGMLEKSNFLDSKKSLYSLFN.

Residue 182–189 (ASSGLGKS) participates in ATP binding.

It belongs to the ATPase alpha/beta chains family.

It is found in the cytoplasm. The catalysed reaction is ATP + H2O + 4 H(+)(in) = ADP + phosphate + 5 H(+)(out). Probable catalytic subunit of a protein translocase for flagellum-specific export, or a proton translocase involved in local circuits at the flagellum. May be involved in a specialized protein export pathway that proceeds without signal peptide cleavage. This Buchnera aphidicola subsp. Baizongia pistaciae (strain Bp) protein is Flagellum-specific ATP synthase (fliI).